Consider the following 389-residue polypeptide: Urotensin-2 receptor (389 aa).

Over residues 1 to 10 (MALTPESPSS) the composition is skewed to polar residues. The tract at residues 1-39 (MALTPESPSSFPGLAATGSSVPEPPGGPNATLNSSWASP) is disordered. At 1–54 (MALTPESPSSFPGLAATGSSVPEPPGGPNATLNSSWASPTEPSSLEDLVATGTI) the chain is on the extracellular side. 2 N-linked (GlcNAc...) asparagine glycosylation sites follow: Asn29 and Asn33. Polar residues predominate over residues 30–39 (ATLNSSWASP). Residues 55-77 (GTLLSAMGVVGVVGNAYTLVVTC) traverse the membrane as a helical segment. The Cytoplasmic segment spans residues 78-87 (RSLRAVASMY). Residues 88-113 (VYVVNLALADLLYLLSIPFIVATYVT) form a helical membrane-spanning segment. Residues 114-124 (KEWHFGDVGCR) lie on the Extracellular side of the membrane. Residues Cys123 and Cys199 are joined by a disulfide bond. Residues 125 to 146 (VLFGLDFLTMHASIFTLTVMSS) form a helical membrane-spanning segment. At 147–167 (ERYAAVLRPLDTVQRPKGYRK) the chain is on the cytoplasmic side. Residues 168–186 (LLALGTWLLALLLTLPVML) form a helical membrane-spanning segment. The Extracellular portion of the chain corresponds to 187-209 (AMRLVRRGPKSLCLPAWGPRAHR). The helical transmembrane segment at 210–232 (AYLTLLFATSIAGPGLLIGLLYA) threads the bilayer. At 233–258 (RLARAYRRSQRASFKRARRPGARALR) the chain is on the cytoplasmic side. A helical transmembrane segment spans residues 259-284 (LVLGIVLLFWACFLPFWLWQLLAQYH). At 285 to 297 (QAPLAPRTARIVN) the chain is on the extracellular side. A helical membrane pass occupies residues 298–318 (YLTTCLTYGNSCANPFLYTLL). Over 319–389 (TRNYRDHLRG…PAPEGPRAPA (71 aa)) the chain is Cytoplasmic. The tract at residues 328-389 (GRVRGPGSGG…PAPEGPRAPA (62 aa)) is disordered. The segment covering 331-340 (RGPGSGGGRG) has biased composition (gly residues). Residues 355 to 368 (SGRSLSSCSPQPTD) show a composition bias toward polar residues. Pro residues predominate over residues 377 to 389 (PARPAPEGPRAPA).

The protein belongs to the G-protein coupled receptor 1 family. In terms of tissue distribution, most abundant expression in the heart and pancreas.

The protein resides in the cell membrane. High affinity receptor for urotensin-2 and urotensin-2B. The activity of this receptor is mediated by a G-protein that activate a phosphatidylinositol-calcium second messenger system. The sequence is that of Urotensin-2 receptor (UTS2R) from Homo sapiens (Human).